A 941-amino-acid polypeptide reads, in one-letter code: MutS protein homolog 1 (941 aa).

747–754 (GPNMAGKS) is a binding site for ATP.

The protein belongs to the DNA mismatch repair MutS family.

The protein resides in the cytoplasm. Its subcellular location is the mitochondrion. Its function is as follows. Involved in mitochondrial DNA repair. The sequence is that of MutS protein homolog 1 (msh1) from Schizosaccharomyces pombe (strain 972 / ATCC 24843) (Fission yeast).